The primary structure comprises 343 residues: SH2 domain-containing adapter protein D (343 aa).

Residues 1–176 (MAKWLRDYLN…PADEYDQPWE (176 aa)) form a disordered region. Composition is skewed to basic and acidic residues over residues 29–40 (DILRAYREQKDL) and 73–82 (IKVEAADMAR). Acidic residues predominate over residues 92-102 (EEPEAETEYSD). A compositionally biased stretch (basic and acidic residues) spans 160–176 (RPLEDERPADEYDQPWE). The region spanning 225–320 (WFHGPLSRAE…AEHLALLYPV (96 aa)) is the SH2 domain. A disordered region spans residues 322-343 (SSQSSQGPCTLAAKPERGQGDP).

In terms of processing, tyrosine phosphorylated by ABL. In terms of tissue distribution, specifically expressed in brain.

Its function is as follows. May function as an adapter protein. The chain is SH2 domain-containing adapter protein D (Shd) from Mus musculus (Mouse).